Here is a 123-residue protein sequence, read N- to C-terminus: Small ribosomal subunit protein uS12 (123 aa).

A 3-methylthioaspartic acid modification is found at Asp-89. The interval 104–123 (TAGVKDRKQARSKYGAKRPK) is disordered. Residues 113–123 (ARSKYGAKRPK) show a composition bias toward basic residues.

This sequence belongs to the universal ribosomal protein uS12 family. As to quaternary structure, part of the 30S ribosomal subunit. Contacts proteins S8 and S17. May interact with IF1 in the 30S initiation complex.

In terms of biological role, with S4 and S5 plays an important role in translational accuracy. Functionally, interacts with and stabilizes bases of the 16S rRNA that are involved in tRNA selection in the A site and with the mRNA backbone. Located at the interface of the 30S and 50S subunits, it traverses the body of the 30S subunit contacting proteins on the other side and probably holding the rRNA structure together. The combined cluster of proteins S8, S12 and S17 appears to hold together the shoulder and platform of the 30S subunit. The polypeptide is Small ribosomal subunit protein uS12 (Neisseria meningitidis serogroup C (strain 053442)).